We begin with the raw amino-acid sequence, 155 residues long: Small ribosomal subunit protein uS7c (155 aa).

Belongs to the universal ribosomal protein uS7 family. As to quaternary structure, part of the 30S ribosomal subunit.

The protein localises to the plastid. It localises to the chloroplast. Functionally, one of the primary rRNA binding proteins, it binds directly to 16S rRNA where it nucleates assembly of the head domain of the 30S subunit. This is Small ribosomal subunit protein uS7c (rps7) from Dioscorea bulbifera (Air potato).